A 223-amino-acid chain; its full sequence is Sigma non-opioid intracellular receptor 1 (223 aa).

At 1–9 (MPWAAGRRW) the chain is on the lumenal side. Positions 2–8 (PWAAGRR) are targeting to endoplasmic reticulum-associated lipid droplets. A helical membrane pass occupies residues 10 to 30 (AWITLILTIIAVLIQAAWLWL). The Cytoplasmic portion of the chain corresponds to 31–223 (GTQNFVFSRE…LTTYLFGQDS (193 aa)). The tract at residues 99–106 (SLSEYVLL) is important for ligand-binding. The interval 177–223 (VIPSTLFFALADTFFSTQDYLTLFYTLRAYARGLRLELTTYLFGQDS) is C-terminal hydrophobic region.

This sequence belongs to the ERG2 family. Homotrimer. Interacts with KCNA4. Interacts with KCNA2; cocaine consumption leads to increased interaction. Forms a ternary complex with ANK2 and ITPR3. The complex is disrupted by agonists. Interacts with RNF112 in an oxidative stress-regulated manner. As to expression, widely expressed with higher expression in liver, brain, kidney and thymus. Expressed throughout the brain with higher expression within cerebral cortex, hippocampus and cerebellum. Within the hippocampus expressed in cornu ammonis pyramidal neurons, the granular cells of the dentate gyrus as well as interneurons. Within the cerebellum, expressed in Purkinje cell bodies. Highly expressed in the brainstem and motor neurons of the spinal cord. Expressed by neural retina, retinal pigment epithelial cells and lens.

Its subcellular location is the nucleus inner membrane. The protein localises to the nucleus outer membrane. The protein resides in the nucleus envelope. It is found in the cytoplasmic vesicle. It localises to the endoplasmic reticulum membrane. Its subcellular location is the membrane. The protein localises to the lipid droplet. The protein resides in the cell junction. It is found in the cell membrane. It localises to the cell projection. Its subcellular location is the growth cone. The protein localises to the postsynaptic density membrane. Its function is as follows. Functions in lipid transport from the endoplasmic reticulum and is involved in a wide array of cellular functions probably through regulation of the biogenesis of lipid microdomains at the plasma membrane. Involved in the regulation of different receptors it plays a role in BDNF signaling and EGF signaling. Also regulates ion channels like the potassium channel and could modulate neurotransmitter release. Plays a role in calcium signaling through modulation together with ANK2 of the ITP3R-dependent calcium efflux at the endoplasmic reticulum. Plays a role in several other cell functions including proliferation, survival and death. Originally identified for its ability to bind various psychoactive drugs it is involved in learning processes, memory and mood alteration. Necessary for proper mitochondrial axonal transport in motor neurons, in particular the retrograde movement of mitochondria. Plays a role in protecting cells against oxidative stress-induced cell death via its interaction with RNF112. In Mus musculus (Mouse), this protein is Sigma non-opioid intracellular receptor 1 (Sigmar1).